Here is a 37-residue protein sequence, read N- to C-terminus: Large ribosomal subunit protein bL36 (37 aa).

This sequence belongs to the bacterial ribosomal protein bL36 family.

The protein is Large ribosomal subunit protein bL36 of Salinispora tropica (strain ATCC BAA-916 / DSM 44818 / JCM 13857 / NBRC 105044 / CNB-440).